Here is a 22-residue protein sequence, read N- to C-terminus: Mu-conotoxin GIIIC (22 aa).

3 disulfides stabilise this stretch: Cys-3/Cys-15, Cys-4/Cys-20, and Cys-10/Cys-21. 3 positions are modified to 4-hydroxyproline: Pro-6, Pro-7, and Pro-17. Position 22 is an alanine amide (Ala-22).

The protein belongs to the conotoxin M superfamily. In terms of tissue distribution, expressed by the venom duct.

It is found in the secreted. In terms of biological role, mu-conotoxins block voltage-gated sodium channels (Nav). This toxin shows potent activity on Nav1.4/SCN4A (IC(50)=286 nM), and weak activity on mNav1.6/SCN8A. This chain is Mu-conotoxin GIIIC, found in Conus geographus (Geography cone).